Consider the following 414-residue polypeptide: Multifunctional CCA protein (414 aa).

ATP contacts are provided by Gly-8 and Arg-11. Residues Gly-8 and Arg-11 each contribute to the CTP site. Mg(2+)-binding residues include Asp-21 and Asp-23. Residues Arg-91, Arg-137, and Arg-140 each coordinate ATP. 3 residues coordinate CTP: Arg-91, Arg-137, and Arg-140. Residues 226–327 (TGVHVMMVVD…VTLFERCDAF (102 aa)) form the HD domain.

The protein belongs to the tRNA nucleotidyltransferase/poly(A) polymerase family. Bacterial CCA-adding enzyme type 1 subfamily. As to quaternary structure, monomer. Can also form homodimers and oligomers. It depends on Mg(2+) as a cofactor. Ni(2+) serves as cofactor.

The enzyme catalyses a tRNA precursor + 2 CTP + ATP = a tRNA with a 3' CCA end + 3 diphosphate. The catalysed reaction is a tRNA with a 3' CCA end + 2 CTP + ATP = a tRNA with a 3' CCACCA end + 3 diphosphate. Its function is as follows. Catalyzes the addition and repair of the essential 3'-terminal CCA sequence in tRNAs without using a nucleic acid template. Adds these three nucleotides in the order of C, C, and A to the tRNA nucleotide-73, using CTP and ATP as substrates and producing inorganic pyrophosphate. tRNA 3'-terminal CCA addition is required both for tRNA processing and repair. Also involved in tRNA surveillance by mediating tandem CCA addition to generate a CCACCA at the 3' terminus of unstable tRNAs. While stable tRNAs receive only 3'-terminal CCA, unstable tRNAs are marked with CCACCA and rapidly degraded. The chain is Multifunctional CCA protein from Herminiimonas arsenicoxydans.